Here is a 162-residue protein sequence, read N- to C-terminus: Corticoliberin-2 (162 aa).

The N-terminal stretch at Met1–Ala24 is a signal peptide. A propeptide spanning residues Ile25 to Arg119 is cleaved from the precursor. The disordered stretch occupies residues Leu57–Ser79. Residue Phe160 is modified to Phenylalanine amide.

The protein belongs to the sauvagine/corticotropin-releasing factor/urotensin I family.

It is found in the secreted. Its function is as follows. This hormone from hypothalamus regulates the release of corticotropin from pituitary gland. This is Corticoliberin-2 (crf2) from Catostomus commersonii (White sucker).